We begin with the raw amino-acid sequence, 553 residues long: Arginine--tRNA ligase (553 aa).

A 'HIGH' region motif is present at residues 122-132 (ANPTGFLHVGH).

It belongs to the class-I aminoacyl-tRNA synthetase family. As to quaternary structure, monomer.

The protein localises to the cytoplasm. It catalyses the reaction tRNA(Arg) + L-arginine + ATP = L-arginyl-tRNA(Arg) + AMP + diphosphate. The sequence is that of Arginine--tRNA ligase from Mesoplasma florum (strain ATCC 33453 / NBRC 100688 / NCTC 11704 / L1) (Acholeplasma florum).